The sequence spans 267 residues: tRNA pseudouridine synthase A (267 aa).

Asp51 (nucleophile) is an active-site residue. Residue Tyr109 coordinates substrate.

It belongs to the tRNA pseudouridine synthase TruA family. Homodimer.

The catalysed reaction is uridine(38/39/40) in tRNA = pseudouridine(38/39/40) in tRNA. In terms of biological role, formation of pseudouridine at positions 38, 39 and 40 in the anticodon stem and loop of transfer RNAs. This is tRNA pseudouridine synthase A from Staphylococcus epidermidis (strain ATCC 12228 / FDA PCI 1200).